Reading from the N-terminus, the 158-residue chain is Cyclic pyranopterin monophosphate synthase (158 aa).

Residues 75 to 77 and 113 to 114 each bind substrate; these read LCH and ME. D128 is an active-site residue.

It belongs to the MoaC family. Homohexamer; trimer of dimers.

The catalysed reaction is (8S)-3',8-cyclo-7,8-dihydroguanosine 5'-triphosphate = cyclic pyranopterin phosphate + diphosphate. It participates in cofactor biosynthesis; molybdopterin biosynthesis. Catalyzes the conversion of (8S)-3',8-cyclo-7,8-dihydroguanosine 5'-triphosphate to cyclic pyranopterin monophosphate (cPMP). This is Cyclic pyranopterin monophosphate synthase from Actinobacillus pleuropneumoniae serotype 5b (strain L20).